Reading from the N-terminus, the 1281-residue chain is Dynactin subunit 1 (1281 aa).

The segment at 1–26 (MAQSRRHMSSRTPSGSRMSTEASARP) is disordered. Positions 10–22 (SRTPSGSRMSTEA) are enriched in polar residues. The CAP-Gly domain maps to 48 to 90 (GATLFATGKWVGVILDEAKGKNDGTVQGRKYFTCDEGHGIFVR). Residues 100–221 (GADTTSPETP…SPSKEEEGLR (122 aa)) form a disordered region. A compositionally biased stretch (polar residues) spans 102–114 (DTTSPETPDSSAS). Phosphothreonine is present on residues Thr-108, Thr-145, Thr-146, and Thr-147. Residues 129–152 (SKLRGLKPKKAPTARKTTTRRPKP) show a composition bias toward basic residues. A compositionally biased stretch (low complexity) spans 161 to 205 (AGPSSSLGPSGSASAGELSSSEPSTPAQTPLAAPIIPTPALTSPG). Ser-179 carries the phosphoserine; by PLK1 modification. Ser-212 is modified (phosphoserine; by CDK1). Coiled-coil stretches lie at residues 214-547 (SKEE…RQQQ), 943-1049 (LKLE…EGLR), and 1185-1214 (SAQLMEQVAQLKSLSDTIEKLKDEVLKETV). The segment at 911–1281 (EYDAERPPSK…LHQLHSRLIS (371 aa)) is interaction with HPS6.

The protein belongs to the dynactin 150 kDa subunit family. Monomer and homodimer. Subunit of dynactin, a multiprotein complex part of a tripartite complex with dynein and a adapter, such as BICDL1, BICD2 or HOOK3. The dynactin complex is built around ACTR1A/ACTB filament and consists of an actin-related filament composed of a shoulder domain, a pointed end and a barbed end. Its length is defined by its flexible shoulder domain. The soulder is composed of 2 DCTN1 subunits, 4 DCTN2 and 2 DCTN3. DCTN1/p150(glued) binds directly to microtubules and to cytoplasmic dynein. The 4 DCNT2 (via N-terminus) bind the ACTR1A filament and act as molecular rulers to determine the length. The pointed end is important for binding dynein-dynactin cargo adapters. Consists of 4 subunits: ACTR10, DCNT4, DCTN5 and DCTN6. The barbed end is composed of a CAPZA1:CAPZB heterodimers, which binds ACTR1A/ACTB filament and dynactin and stabilizes dynactin. Interacts with the C-terminus of MAPRE1, MAPRE2 and MAPRE3. Interacts with FBXL5. Interacts with ECPAS. Interacts with CLIP1. Interacts with CLN3 and DYNAP. Interacts with MISP; this interaction regulates its distribution at the cell cortex. Interacts with CEP131. Interacts with CEP126. Interacts with dynein intermediate chain and dynein heavy chain. Interacts with PLK1 (via POLO-box domain). Interacts with TBCB and PARD6A. Binds preferentially to tyrosinated microtubules than to detyrosinated microtubules. Interacts with KIF3A. Interacts with HPS6. Interacts with SNX6. Interacts with BICD2. Interacts with DST (isoform 1). Identified in a complex with MREG and RILP. Interacts with BCCIP. Interacts with DCDC1. Interacts with AKNA. Interacts with DYNC1I2. Interacts with RUFY3 and RUFY4. In terms of processing, ubiquitinated by a SCF complex containing FBXL5, leading to its degradation by the proteasome. Post-translationally, phosphorylation by SLK at Thr-145, Thr-146 and Thr-147 targets DCTN1 to the centrosome. It is uncertain if SLK phosphorylates all three threonines or one or two of them. PLK1-mediated phosphorylation at Ser-179 is essential for its localization in the nuclear envelope and promotes its dissociation from microtubules during early mitosis and positively regulates nuclear envelope breakdown during prophase.

It is found in the cytoplasm. It localises to the cytoskeleton. The protein localises to the microtubule organizing center. Its subcellular location is the centrosome. The protein resides in the centriole. It is found in the spindle. It localises to the nucleus envelope. The protein localises to the cell cortex. Part of the dynactin complex that activates the molecular motor dynein for ultra-processive transport along microtubules. Plays a key role in dynein-mediated retrograde transport of vesicles and organelles along microtubules by recruiting and tethering dynein to microtubules. Binds to both dynein and microtubules providing a link between specific cargos, microtubules and dynein. Essential for targeting dynein to microtubule plus ends, recruiting dynein to membranous cargos and enhancing dynein processivity (the ability to move along a microtubule for a long distance without falling off the track). Can also act as a brake to slow the dynein motor during motility along the microtubule. Can regulate microtubule stability by promoting microtubule formation, nucleation and polymerization and by inhibiting microtubule catastrophe in neurons. Inhibits microtubule catastrophe by binding both to microtubules and to tubulin, leading to enhanced microtubule stability along the axon. Plays a role in metaphase spindle orientation. Plays a role in centriole cohesion and subdistal appendage organization and function. Its recruitment to the centriole in a KIF3A-dependent manner is essential for the maintenance of centriole cohesion and the formation of subdistal appendage. Also required for microtubule anchoring at the mother centriole. Plays a role in primary cilia formation. The chain is Dynactin subunit 1 (Dctn1) from Mus musculus (Mouse).